A 434-amino-acid chain; its full sequence is ATP-dependent protease ATPase subunit HslU (434 aa).

ATP-binding positions include isoleucine 18, 60 to 65 (GVGKTE), aspartate 247, glutamate 312, and arginine 384.

The protein belongs to the ClpX chaperone family. HslU subfamily. A double ring-shaped homohexamer of HslV is capped on each side by a ring-shaped HslU homohexamer. The assembly of the HslU/HslV complex is dependent on binding of ATP.

It localises to the cytoplasm. In terms of biological role, ATPase subunit of a proteasome-like degradation complex; this subunit has chaperone activity. The binding of ATP and its subsequent hydrolysis by HslU are essential for unfolding of protein substrates subsequently hydrolyzed by HslV. HslU recognizes the N-terminal part of its protein substrates and unfolds these before they are guided to HslV for hydrolysis. The chain is ATP-dependent protease ATPase subunit HslU from Brucella melitensis biotype 2 (strain ATCC 23457).